Reading from the N-terminus, the 415-residue chain is Polyadenylate-binding protein RBP45C (415 aa).

The interval 1 to 77 (MMQQPPPASN…GGSQNPGSAG (77 aa)) is disordered. The span at 23-64 (QQAYLQQQQSWMMQHQQQQQGQPPAGWNQQSAPSSGQPQQQQ) shows a compositional bias: low complexity. 3 consecutive RRM domains span residues 80–160 (RSLW…WAQL), 173–252 (HTVF…PAAN), and 278–350 (TTIF…WGRS). Residues 344-356 (RLSWGRSPSNKQT) show a composition bias toward polar residues. Residues 344 to 369 (RLSWGRSPSNKQTQPDQAQYGGGGGY) are disordered.

The protein belongs to the polyadenylate-binding RBP45 family. In terms of assembly, interacts with the poly(A) tail of mRNA in nucleus. Mostly expressed in seedlings and stems, and, to a lower extent, in leaves and flowers.

It is found in the nucleus. Its function is as follows. Heterogeneous nuclear ribonucleoprotein (hnRNP)-protein binding the poly(A) tail of mRNA and probably involved in some steps of pre-mRNA maturation. The protein is Polyadenylate-binding protein RBP45C (RBP45C) of Arabidopsis thaliana (Mouse-ear cress).